We begin with the raw amino-acid sequence, 380 residues long: MIISSPNDYRAAAKSRLPPFLFHYVDGGAYAEYTLRRNVEDLSHIALRQQVLRNVADLSLETELFGQKLTMPVALAPVGLTGMLARRGEVQAAKAAQAKGVPFTLSTVSVCPIEEVQSQCAKPIWFQLYVLKDRGFMRNALERAQAAGINTLIFTVDMPVPGARYRDAHSGMSGRSGPTRRVLQAMVHPRWALDVGLLGKPHDLGNISTYRGKPTNLADYIGWLAANFDPSISWKDLEWIRSFWKGPMIIKGILDPVDARDAVAFGADGIVVSNHGGRQLDGVLSSARALPAIADAVGDDLTVLADSGIRTGLDVVRMLALGAKGVLLGRAFAYALATHGQAGVANLLDLIEKEMRVAMALTGARSIAEITRDSLVGLPR.

The FMN hydroxy acid dehydrogenase domain occupies 1-380 (MIISSPNDYR…TRDSLVGLPR (380 aa)). A substrate-binding site is contributed by Tyr-24. The FMN site is built by Ser-106 and Gln-127. A substrate-binding site is contributed by Tyr-129. Position 155 (Thr-155) interacts with FMN. Arg-164 lines the substrate pocket. Lys-251 is an FMN binding site. His-275 acts as the Proton acceptor in catalysis. Substrate is bound at residue Arg-278. 306–330 (DSGIRTGLDVVRMLALGAKGVLLGR) is an FMN binding site.

It belongs to the FMN-dependent alpha-hydroxy acid dehydrogenase family. It depends on FMN as a cofactor.

The protein localises to the cell inner membrane. The catalysed reaction is (S)-lactate + A = pyruvate + AH2. Functionally, catalyzes the conversion of L-lactate to pyruvate. Is coupled to the respiratory chain. In Azorhizobium caulinodans (strain ATCC 43989 / DSM 5975 / JCM 20966 / LMG 6465 / NBRC 14845 / NCIMB 13405 / ORS 571), this protein is L-lactate dehydrogenase.